A 941-amino-acid chain; its full sequence is Glycine dehydrogenase (decarboxylating) (941 aa).

Lysine 692 carries the post-translational modification N6-(pyridoxal phosphate)lysine.

This sequence belongs to the GcvP family. The glycine cleavage system is composed of four proteins: P, T, L and H. Pyridoxal 5'-phosphate serves as cofactor.

The catalysed reaction is N(6)-[(R)-lipoyl]-L-lysyl-[glycine-cleavage complex H protein] + glycine + H(+) = N(6)-[(R)-S(8)-aminomethyldihydrolipoyl]-L-lysyl-[glycine-cleavage complex H protein] + CO2. Functionally, the glycine cleavage system catalyzes the degradation of glycine. The P protein binds the alpha-amino group of glycine through its pyridoxal phosphate cofactor; CO(2) is released and the remaining methylamine moiety is then transferred to the lipoamide cofactor of the H protein. In Mycolicibacterium paratuberculosis (strain ATCC BAA-968 / K-10) (Mycobacterium paratuberculosis), this protein is Glycine dehydrogenase (decarboxylating).